Reading from the N-terminus, the 111-residue chain is Viscotoxin-A3 (111 aa).

The first 26 residues, 1–26, serve as a signal peptide directing secretion; that stretch reads MEVVRGSSLVLLVLLLGALLVSQVES. Intrachain disulfides connect Cys29–Cys66, Cys30–Cys58, and Cys42–Cys52. A propeptide spans 73–111 (acidic domain); that stretch reads FYCTLGCESSQCATNSNGDAEAVRCKTACSDLCQDVDDA.

This sequence belongs to the plant thionin (TC 1.C.44) family.

The protein localises to the secreted. In terms of biological role, thionins are small plant proteins which are toxic to animal cells. They seem to exert their toxic effect at the level of the cell membrane. Their precise function is not known. This chain is Viscotoxin-A3 (THI2.1), found in Viscum album (European mistletoe).